The primary structure comprises 446 residues: 3-phosphoshikimate 1-carboxyvinyltransferase (446 aa).

Positions methionine 1–proline 20 are disordered. 3-phosphoshikimate-binding residues include lysine 23, serine 24, and arginine 28. Lysine 23 serves as a coordination point for phosphoenolpyruvate. Phosphoenolpyruvate contacts are provided by glycine 100 and arginine 128. Residues serine 171, serine 172, glutamine 173, serine 200, glutamate 315, and histidine 344 each contribute to the 3-phosphoshikimate site. Phosphoenolpyruvate is bound at residue glutamine 173. The active-site Proton acceptor is the glutamate 315. Arginine 348, arginine 389, and lysine 414 together coordinate phosphoenolpyruvate.

It belongs to the EPSP synthase family. In terms of assembly, monomer.

It localises to the cytoplasm. The catalysed reaction is 3-phosphoshikimate + phosphoenolpyruvate = 5-O-(1-carboxyvinyl)-3-phosphoshikimate + phosphate. It functions in the pathway metabolic intermediate biosynthesis; chorismate biosynthesis; chorismate from D-erythrose 4-phosphate and phosphoenolpyruvate: step 6/7. Its function is as follows. Catalyzes the transfer of the enolpyruvyl moiety of phosphoenolpyruvate (PEP) to the 5-hydroxyl of shikimate-3-phosphate (S3P) to produce enolpyruvyl shikimate-3-phosphate and inorganic phosphate. The protein is 3-phosphoshikimate 1-carboxyvinyltransferase of Mycolicibacterium vanbaalenii (strain DSM 7251 / JCM 13017 / BCRC 16820 / KCTC 9966 / NRRL B-24157 / PYR-1) (Mycobacterium vanbaalenii).